The following is a 135-amino-acid chain: U-myrmeciitoxin(01)-Mg7a (135 aa).

The signal sequence occupies residues 1-21 (MKLSCLSLALAIILLLAIVHS). A propeptide spanning residues 22 to 72 (PNMEVKALAGPEADAIGFADAFGEADAFGEADAFGEADAFGEADAFGEADA) is cleaved from the precursor. The segment at 69–95 (EADAKRSKSSSKTKPKKPKKPKKKIKI) is disordered. Over residues 75–93 (SKSSSKTKPKKPKKPKKKI) the composition is skewed to basic residues. A glycan (O-linked (GalNAc...) serine) is linked at S120. T129 and T130 each carry an O-linked (GalNAc...) threonine glycan.

The protein belongs to the formicidae venom precursor-01 superfamily. In terms of processing, glycosylation is critical to maintaining the aqueous solubility of this protein, but does not directly contribute to its activity. As to expression, expressed by the venom gland.

The protein localises to the secreted. The protein resides in the target cell membrane. In terms of biological role, neurotoxin that triggers pain behavior and inflammation in mammals, and is paralytic and lethal to insects. Causes a time-dependent increase in cell leak current. May act by targeting membranes. This chain is U-myrmeciitoxin(01)-Mg7a, found in Myrmecia gulosa (Red bulldog ant).